The sequence spans 181 residues: Biofilm-surface layer protein A (181 aa).

The first 28 residues, 1–28, serve as a signal peptide directing secretion; that stretch reads MKRKLLSSLAISALSLGLLVSAPTASFA.

It belongs to the BslA/BslB family. As to quaternary structure, forms polymers.

Its subcellular location is the secreted. It localises to the cell wall. Involved in biofilm formation. Self-polymerizes and forms a layer on the surface of biofilms that confers hydrophobicity to the biofilm. The layer is stable and capable of resistance to high mechanical force compression. Required for complex colony architecture. May function synergistically with exopolysaccharides and TasA amyloid fibers to facilitate the assembly of the biofilm matrix. This Bacillus subtilis (strain 168) protein is Biofilm-surface layer protein A.